Here is a 422-residue protein sequence, read N- to C-terminus: GTPase Obg (422 aa).

The 156-residue stretch at 2 to 157 folds into the Obg domain; it reads AKFIDEIKLT…YLAHIVLKVM (156 aa). Positions 158 to 325 constitute an OBG-type G domain; that stretch reads SDVGIIGKPS…LKGKIWKILE (168 aa). GTP is bound by residues 164 to 171, 189 to 193, 210 to 213, 279 to 282, and 306 to 308; these read GKPSAGKS, FTTLV, DLPG, NKSD, and SAI. Residues serine 171 and threonine 191 each coordinate Mg(2+). The OCT domain maps to 334-420; the sequence is EEEETEENVE…ILDYEFEWDG (87 aa).

This sequence belongs to the TRAFAC class OBG-HflX-like GTPase superfamily. OBG GTPase family. In terms of assembly, monomer. Requires Mg(2+) as cofactor.

The protein localises to the cytoplasm. Functionally, an essential GTPase which binds GTP, GDP and possibly (p)ppGpp with moderate affinity, with high nucleotide exchange rates and a fairly low GTP hydrolysis rate. Plays a role in control of the cell cycle, stress response, ribosome biogenesis and in those bacteria that undergo differentiation, in morphogenesis control. The polypeptide is GTPase Obg (Mycoplasmopsis agalactiae (strain NCTC 10123 / CIP 59.7 / PG2) (Mycoplasma agalactiae)).